Here is a 212-residue protein sequence, read N- to C-terminus: Adenylate kinase (212 aa).

10 to 15 contacts ATP; it reads GAGKGT. Positions 30–59 are NMP; sequence AIGDIFRTIIKTSTSEAELINNYVKQGELI. AMP-binding positions include R36, 57 to 59, 85 to 88, and Q92; these read ELI and GYPR. An LID region spans residues 122–160; that stretch reads GRYSCKNCGKIYNRYFLQPKTDNVCDVCGSSTFDYRKDD. R123 provides a ligand contact to ATP. Zn(2+) is bound by residues C126 and C129. An ATP-binding site is contributed by 132-133; that stretch reads IY. Zn(2+) is bound by residues C146 and C149. R157 and R168 together coordinate AMP. K196 is an ATP binding site.

It belongs to the adenylate kinase family. In terms of assembly, monomer.

It is found in the cytoplasm. It carries out the reaction AMP + ATP = 2 ADP. It functions in the pathway purine metabolism; AMP biosynthesis via salvage pathway; AMP from ADP: step 1/1. Its function is as follows. Catalyzes the reversible transfer of the terminal phosphate group between ATP and AMP. Plays an important role in cellular energy homeostasis and in adenine nucleotide metabolism. This is Adenylate kinase from Rickettsia africae (strain ESF-5).